Reading from the N-terminus, the 126-residue chain is Allergen Tha p 1 (126 aa).

A signal peptide spans 1–18 (MKLLILALTCAAAVWARP).

It belongs to the insect A10/OS-D protein family.

It is found in the secreted. The sequence is that of Allergen Tha p 1 from Thaumetopoea pityocampa (Pine processionary moth).